The following is a 411-amino-acid chain: Cytochrome P450 monooxygenase sirE (411 aa).

Residues Asn-12 and Asn-149 are each glycosylated (N-linked (GlcNAc...) asparagine). Residues 181-203 (FLNVISIFTVMMASLNVLYDILA) traverse the membrane as a helical segment. An N-linked (GlcNAc...) asparagine glycan is attached at Asn-342. Cys-352 is a heme binding site.

The protein belongs to the cytochrome P450 family. The cofactor is heme.

The protein resides in the membrane. The protein operates within mycotoxin biosynthesis. In terms of biological role, cytochrome P450 monooxygenase; part of the gene cluster that mediates the biosynthesis of sirodesmin PL, an epipolythiodioxopiperazine (ETP) characterized by a disulfide bridged cyclic dipeptide and that acts as a phytotoxin which is involved in the blackleg didease of canola. SirD catalyzes the O-prenylation of L-tyrosine (L-Tyr) in the presence of dimethylallyl diphosphate (DMAPP) to yield 4-O-dimethylallyl-L-Tyr, and therefore represents probably the first pathway-specific enzyme in the biosynthesis of sirodesmin PL. 4-O-dimethylallyl-L-Tyr, then undergoes condensation with L-Ser in a reaction catalyzed by the non-ribosomal peptide synthase sirP to form the diketopiperazine (DKP) backbone. Further bishydroxylation of the DKP performed by the cytochrome P450 monooxygenase sirC leads to the production of the intermediate phomamide. This step is essential to form the reactive thiol group required for toxicity of sirodesmin PL. The next steps of sirodesmin biosynthesis are not well understood yet, but some predictions could be made from intermediate compounds identification. Phomamide is converted into phomalizarine via oxidation, probably by sirT. Further oxidation, methylation (by sirM or sirN) and reduction steps convert phomalizarine to deacetyl sirodesmin. Finally, acetyltransferase sirH probably acetylates deacetyl sirodesmin to produce sirodesmin PL. The sequence is that of Cytochrome P450 monooxygenase sirE from Leptosphaeria maculans (Blackleg fungus).